We begin with the raw amino-acid sequence, 548 residues long: Organic cation transporter protein (548 aa).

Topologically, residues 1–22 (MGYDDVITHLGEFGPYQKRIYY) are cytoplasmic. The helical transmembrane segment at 23-43 (LLCLPAIVCAFHKLAGVFLLA) threads the bilayer. Over 44-127 (KPDFRCALPY…TEWNLVCSRS (84 aa)) the chain is Extracellular. N-linked (GlcNAc...) asparagine glycosylation is found at N55, N67, N89, and N97. The helical transmembrane segment at 128–148 (LLSATSDSLFMLGVLLGSLIF) threads the bilayer. Over 149–158 (GQMSDKLGRK) the chain is Cytoplasmic. Residues 159 to 179 (PTFFASLVLQLIFGVLAAVAP) form a helical membrane-spanning segment. The Extracellular segment spans residues 180–189 (EYFSYTISRM). Residues 190-210 (IVGATTSGVFLVAYVIALEMV) form a helical membrane-spanning segment. Over 211-219 (GSSYRLFAG) the chain is Cytoplasmic. The helical transmembrane segment at 220–240 (VAMQMFFSVGFMLTAGFAYFI) threads the bilayer. Over 241-244 (HDWR) the chain is Extracellular. The helical transmembrane segment at 245-265 (WLQIAITLPGLLFLCYYWIIP) threads the bilayer. Topologically, residues 266–337 (ESARWLLMKG…LLRYPNLRRK (72 aa)) are cytoplasmic. The helical transmembrane segment at 338–358 (TLLIFFDWFVNSGVYYGLSWN) threads the bilayer. The Extracellular portion of the chain corresponds to 359–366 (TNNLGGNQ). A helical membrane pass occupies residues 367–387 (LVNFMISGAVEIPGYTLLLFT). The Cytoplasmic portion of the chain corresponds to 388-395 (LNRWGRRS). A helical transmembrane segment spans residues 396-416 (ILCGTMMVAGISLLATIFVPS). The Extracellular segment spans residues 417–419 (DMN). A helical membrane pass occupies residues 420-440 (WLIVACAMIGKLAITSSYGTI). The Cytoplasmic portion of the chain corresponds to 441–453 (YIFSAEQFPTVVR). Residues 454-474 (NVGLGASSMVARVGGILAPYL) form a helical membrane-spanning segment. The Extracellular portion of the chain corresponds to 475–482 (KLLGEIWR). Residues 483–503 (PLPLIICGALSLTAGLLSLLL) form a helical membrane-spanning segment. The Cytoplasmic portion of the chain corresponds to 504-548 (PETLNKPMPETIEDGENFGKKPAPQETAEEGGTQELSGMLNGKSG). The tract at residues 512–548 (PETIEDGENFGKKPAPQETAEEGGTQELSGMLNGKSG) is disordered.

It belongs to the major facilitator (TC 2.A.1) superfamily. Organic cation transporter (TC 2.A.1.19) family. Expressed in embryos and adults at low level. Expressed at higher level in third instar larvae.

It localises to the membrane. Functionally, probably transports organic cations. In Drosophila melanogaster (Fruit fly), this protein is Organic cation transporter protein (Orct).